The primary structure comprises 466 residues: UDP-N-acetylmuramoylalanine--D-glutamate ligase (466 aa).

128–134 is a binding site for ATP; the sequence is GTNGKST.

The protein belongs to the MurCDEF family.

It localises to the cytoplasm. It catalyses the reaction UDP-N-acetyl-alpha-D-muramoyl-L-alanine + D-glutamate + ATP = UDP-N-acetyl-alpha-D-muramoyl-L-alanyl-D-glutamate + ADP + phosphate + H(+). The protein operates within cell wall biogenesis; peptidoglycan biosynthesis. Functionally, cell wall formation. Catalyzes the addition of glutamate to the nucleotide precursor UDP-N-acetylmuramoyl-L-alanine (UMA). This is UDP-N-acetylmuramoylalanine--D-glutamate ligase from Bartonella henselae (strain ATCC 49882 / DSM 28221 / CCUG 30454 / Houston 1) (Rochalimaea henselae).